The primary structure comprises 194 residues: Phosphoheptose isomerase (194 aa).

The SIS domain occupies 37–194 (ISNSFKQGGK…LIEFEMAKQA (158 aa)). Substrate is bound at residue 52–54 (NGG). Residues His-61 and Glu-65 each coordinate Zn(2+). Residues Glu-65, 93 to 94 (ND), 119 to 121 (STS), Ser-124, and Gln-172 contribute to the substrate site. Zn(2+) contacts are provided by Gln-172 and His-180.

The protein belongs to the SIS family. GmhA subfamily. As to quaternary structure, homotetramer. Zn(2+) serves as cofactor.

It localises to the cytoplasm. It carries out the reaction 2 D-sedoheptulose 7-phosphate = D-glycero-alpha-D-manno-heptose 7-phosphate + D-glycero-beta-D-manno-heptose 7-phosphate. It participates in carbohydrate biosynthesis; D-glycero-D-manno-heptose 7-phosphate biosynthesis; D-glycero-alpha-D-manno-heptose 7-phosphate and D-glycero-beta-D-manno-heptose 7-phosphate from sedoheptulose 7-phosphate: step 1/1. Its function is as follows. Catalyzes the isomerization of sedoheptulose 7-phosphate in D-glycero-D-manno-heptose 7-phosphate. In Haemophilus influenzae (strain 86-028NP), this protein is Phosphoheptose isomerase.